The following is a 359-amino-acid chain: Type II methyltransferase M.HinfI (359 aa).

Positions 275 to 358 (KVPMKTLIEA…LDSLRYEYTN (84 aa)) constitute an RAMA domain.

This sequence belongs to the N(4)/N(6)-methyltransferase family.

It carries out the reaction a 2'-deoxyadenosine in DNA + S-adenosyl-L-methionine = an N(6)-methyl-2'-deoxyadenosine in DNA + S-adenosyl-L-homocysteine + H(+). A beta subtype methylase that recognizes the double-stranded sequence 5'-GANTC-3', methylates A-2 on both strands, and protects the DNA from cleavage by the HinfI endonuclease. The sequence is that of Type II methyltransferase M.HinfI (hinfIM) from Haemophilus influenzae.